Consider the following 183-residue polypeptide: Interleukin-36 beta (183 aa).

Residues 1–30 constitute a propeptide that is removed on maturation; sequence MMAFPPQSCVHVLPPKSIQMWEPNHNTMHG.

This sequence belongs to the IL-1 family. Interacts with cargo receptor TMED10; the interaction mediates the translocation from the cytoplasm into the ERGIC (endoplasmic reticulum-Golgi intermediate compartment) and thereby secretion. Post-translationally, N-terminal truncation leads to a dramatic enhancement of its activity (&gt;1000-fold).

It localises to the cytoplasm. Its subcellular location is the secreted. Cytokine that binds to and signals through the IL1RL2/IL-36R receptor which in turn activates NF-kappa-B and MAPK signaling pathways in target cells linked to a pro-inflammatory response. Part of the IL-36 signaling system that is thought to be present in epithelial barriers and to take part in local inflammatory response; similar to the IL-1 system with which it shares the coreceptor IL1RAP. Stimulates production of interleukin-6 and interleukin-8 in synovial fibrobasts, articular chondrocytes and mature adipocytes. Induces expression of a number of antimicrobial peptides including beta-defensin 4 and beta-defensin 103 as well as a number of matrix metalloproteases. Seems to be involved in skin inflammatory response by acting on keratinocytes, dendritic cells and indirectly on T-cells to drive tissue infiltration, cell maturation and cell proliferation. Induces the production of pro-inflammatory cytokines in bone marrow-derived dendritic cells (BMDCs), including IL-12, Il-1 beta, IL-6, TNF-alpha and IL-23, and activates p38 MAPK phosphorylation in BMDCs. Involved in dendritic cell maturation by stimulating the surface expression of CD80, CD86 and MHC class II. Induces the production of IFN-gamma, IL-4 and IL-17 by T-helper 1 (Th1) cells, cultured CD4(+) T-cells and splenocytes. This chain is Interleukin-36 beta, found in Mus musculus (Mouse).